Here is an 83-residue protein sequence, read N- to C-terminus: Arminin 4364 (83 aa).

An N-terminal signal peptide occupies residues 1 to 18 (MKTVFAILFLAFIALTYA). Positions 19-55 (RSYEDVKEEIKNEVEKEILEDLEKETDELNERKINDA) are excised as a propeptide. A Valine amide modification is found at valine 80.

The protein belongs to the arminin family. As to expression, expressed in entodermal epithelium along the body column.

The protein resides in the secreted. It is found in the target cell membrane. Antimicrobial peptide with a broad-spectrum antimicrobial activity. Keeps its antibacterial activity under a wide range of salt concentrations that mimic physiological conditions of human blood, which is surprising, since Hydra is an obligate freshwater animal with nearly no salt tolerance. Does not affect red blood cells. This is Arminin 4364 from Hydra vulgaris (Hydra).